A 294-amino-acid polypeptide reads, in one-letter code: Elongation factor Ts (294 aa).

The tract at residues 81 to 84 (TDFV) is involved in Mg(2+) ion dislocation from EF-Tu.

It belongs to the EF-Ts family.

It is found in the cytoplasm. Its function is as follows. Associates with the EF-Tu.GDP complex and induces the exchange of GDP to GTP. It remains bound to the aminoacyl-tRNA.EF-Tu.GTP complex up to the GTP hydrolysis stage on the ribosome. In Lawsonia intracellularis (strain PHE/MN1-00), this protein is Elongation factor Ts.